The chain runs to 1004 residues: UPF0182 protein Noca_1530 (1004 aa).

The tract at residues 1–20 (MSELFDEAPRDPGPPARSGS) is disordered. Transmembrane regions (helical) follow at residues 26–46 (LIVT…FAGI), 71–91 (VLFF…IYLA), 120–140 (TWLL…SAIG), 183–203 (MAVL…YGGI), 212–232 (LSGA…LAKA), 261–281 (VLPA…LFFV), and 293–313 (VGLA…PGIV). Disordered stretches follow at residues 899–924 (GVST…PPAT) and 974–1004 (LGQK…SPSS). Low complexity-rich tracts occupy residues 903–916 (GPGT…QPGD) and 979–1004 (GSAG…SPSS).

It belongs to the UPF0182 family.

It is found in the cell membrane. The protein is UPF0182 protein Noca_1530 of Nocardioides sp. (strain ATCC BAA-499 / JS614).